The following is a 370-amino-acid chain: uncharacterized protein (370 aa).

Transmembrane regions (helical) follow at residues 11 to 31 (LFIFLCCIMSITILSFSLVFP) and 104 to 124 (IITSMTLTSLIAKVFPIPILI). The interval 145 to 197 (HHNNNNNNNNNNNNNNNNNNNNNNNNNNNNNNNNNNNNQNNNNNDNNDNNDVL) is disordered. A compositionally biased stretch (low complexity) spans 147–194 (NNNNNNNNNNNNNNNNNNNNNNNNNNNNNNNNNNNNQNNNNNDNNDNN). 2 helical membrane passes run 227–247 (ITQLVVNGVSFMITLFSTFVV) and 310–330 (LSLCSLCLDSFSIIVIIFLII).

The protein localises to the membrane. This is an uncharacterized protein from Dictyostelium discoideum (Social amoeba).